Consider the following 435-residue polypeptide: Glutamine synthetase (435 aa).

The GS beta-grasp domain maps to 12 to 94 (KSIKYFMISY…VAADCVMDDR (83 aa)). One can recognise a GS catalytic domain in the interval 100–435 (PRVVLKRLVA…QWERDSTLDI (336 aa)). Residues glutamate 123, glutamate 125, glutamate 180, and glutamate 187 each coordinate Mg(2+). Glycine 232 is a binding site for L-glutamate. Mg(2+) is bound at residue histidine 236. Serine 240 contacts ATP. Positions 291 and 315 each coordinate L-glutamate. ATP-binding residues include arginine 315 and arginine 320. Glutamate 328 contributes to the Mg(2+) binding site. Position 330 (arginine 330) interacts with L-glutamate.

It belongs to the glutamine synthetase family. Homooctamer. Requires Mg(2+) as cofactor.

It catalyses the reaction L-glutamate + NH4(+) + ATP = L-glutamine + ADP + phosphate + H(+). Functionally, catalyzes the ATP-dependent biosynthesis of glutamine from glutamate and ammonia. The sequence is that of Glutamine synthetase from Rhizobium leguminosarum bv. phaseoli.